Here is a 448-residue protein sequence, read N- to C-terminus: Leukocyte immunoglobulin-like receptor subfamily B member 4 (448 aa).

The first 21 residues, 1-21 (MIPTFTALLCLGLSLGPRTHM), serve as a signal peptide directing secretion. The Extracellular segment spans residues 22–259 (QAGPLPKPTL…PHSGLRRHWE (238 aa)). Ig-like C2-type domains follow at residues 27-118 (PKPT…LVMT) and 124-218 (PTLS…LIVS). 2 cysteine pairs are disulfide-bonded: Cys-49–Cys-98 and Cys-144–Cys-195. The interval 217 to 248 (VSGSLEDPRPSPTRSVSTAAGPEDQPLMPTGS) is disordered. Residues 260 to 280 (VLIGVLVVSILLLSLLLFLLL) form a helical membrane-spanning segment. Over 281–448 (QHWRQGKHRT…PSVYATLAIH (168 aa)) the chain is Cytoplasmic. The disordered stretch occupies residues 297-448 (DFQRPPGAAE…PSVYATLAIH (152 aa)). At Ser-319 the chain carries Phosphoserine. Residues 344–354 (MDTRQSPHDED) show a composition bias toward basic and acidic residues. The short motif at 358–363 (VTYAKV) is the ITIM motif 1 element. Residues 384 to 398 (LDTKDRQAEEDRQMD) are compositionally biased toward basic and acidic residues. 2 short sequence motifs (ITIM motif) span residues 410-415 (VTYAQL) and 440-445 (SVYATL).

In terms of assembly, interacts with PTPN6. In terms of tissue distribution, detected on monocytes, macrophages, dendritic cells, natural killer cells and B-cells (at protein level). Expressed in the lung.

Its subcellular location is the cell membrane. Inhibitory receptor involved in the down-regulation of the immune response and the development of immune tolerance. Receptor for FN1. Receptor for apolipoprotein APOE. Receptor for ALCAM/CD166. Inhibits receptor-mediated phosphorylation of cellular proteins and mobilization of intracellular calcium ions. Inhibits FCGR1A/CD64-mediated monocyte activation by inducing phosphatase-mediated down-regulation of the phosphorylation of multiple proteins including LCK, SYK, LAT and ERK, leading to a reduction in TNF production. This inhibition of monocyte activation occurs at least in part via binding to FN1. Inhibits T cell proliferation, inducing anergy, suppressing the differentiation of IFNG-producing CD8+ cytotoxic T cells and enhancing the generation of CD8+ T suppressor cells. Induces up-regulation of CD86 on dendritic cells. Interferes with TNFRSF5-signaling and NF-kappa-B up-regulation. The polypeptide is Leukocyte immunoglobulin-like receptor subfamily B member 4 (LILRB4) (Homo sapiens (Human)).